The primary structure comprises 150 residues: Ribosome maturation factor RimP (150 aa).

The protein belongs to the RimP family.

It localises to the cytoplasm. In terms of biological role, required for maturation of 30S ribosomal subunits. This is Ribosome maturation factor RimP from Thermotoga neapolitana (strain ATCC 49049 / DSM 4359 / NBRC 107923 / NS-E).